The primary structure comprises 452 residues: Exoglucanase 1 (452 aa).

Residues 1 to 18 (MFSKFALTGSLLAGAVNA) form the signal peptide. Asparagine 75 is a glycosylation site (N-linked (GlcNAc...) asparagine). The active-site Nucleophile is the glutamate 230. Catalysis depends on glutamate 235, which acts as the Proton donor. N-linked (GlcNAc...) asparagine glycans are attached at residues asparagine 335 and asparagine 360.

It belongs to the glycosyl hydrolase 7 (cellulase C) family.

The catalysed reaction is Hydrolysis of (1-&gt;4)-beta-D-glucosidic linkages in cellulose and cellotetraose, releasing cellobiose from the non-reducing ends of the chains.. Functionally, the biological conversion of cellulose to glucose generally requires three types of hydrolytic enzymes: (1) Endoglucanases which cut internal beta-1,4-glucosidic bonds; (2) Exocellobiohydrolases that cut the disaccharide cellobiose from the non-reducing end of the cellulose polymer chain; (3) Beta-1,4-glucosidases which hydrolyze the cellobiose and other short cello-oligosaccharides to glucose. In Cryphonectria parasitica (Chestnut blight fungus), this protein is Exoglucanase 1 (CBH-1).